A 300-amino-acid polypeptide reads, in one-letter code: tRNA pseudouridine synthase A (300 aa).

Asp-67 functions as the Nucleophile in the catalytic mechanism. Position 125 (Tyr-125) interacts with substrate.

Belongs to the tRNA pseudouridine synthase TruA family. In terms of assembly, homodimer.

The enzyme catalyses uridine(38/39/40) in tRNA = pseudouridine(38/39/40) in tRNA. Formation of pseudouridine at positions 38, 39 and 40 in the anticodon stem and loop of transfer RNAs. In Synechococcus sp. (strain CC9902), this protein is tRNA pseudouridine synthase A.